The primary structure comprises 1180 residues: DNA-directed RNA polymerase subunit beta (1180 aa).

Residues 1154 to 1164 show a composition bias toward acidic residues; that stretch reads EMKELDDEDEQ. The interval 1154-1180 is disordered; sequence EMKELDDEDEQASDKLNLNIDSTESNV. The segment covering 1167–1180 has biased composition (polar residues); that stretch reads DKLNLNIDSTESNV.

This sequence belongs to the RNA polymerase beta chain family. In terms of assembly, the RNAP catalytic core consists of 2 alpha, 1 beta, 1 beta' and 1 omega subunit. When a sigma factor is associated with the core the holoenzyme is formed, which can initiate transcription.

The enzyme catalyses RNA(n) + a ribonucleoside 5'-triphosphate = RNA(n+1) + diphosphate. DNA-dependent RNA polymerase catalyzes the transcription of DNA into RNA using the four ribonucleoside triphosphates as substrates. The protein is DNA-directed RNA polymerase subunit beta of Halalkalibacterium halodurans (strain ATCC BAA-125 / DSM 18197 / FERM 7344 / JCM 9153 / C-125) (Bacillus halodurans).